Here is a 183-residue protein sequence, read N- to C-terminus: Auxin-responsive protein IAA20 (183 aa).

Disordered regions lie at residues 1–23 (MELE…TATA) and 42–77 (GFEE…NKRR). The EAR-like (transcriptional repression) signature appears at 3 to 7 (LELGL). Residues 98–183 (GGYVKVKMEG…KSVKRLKILV (86 aa)) enclose the PB1 domain.

This sequence belongs to the Aux/IAA family. In terms of assembly, homodimers and heterodimers. Expressed at very low levels in etiolated seedlings and flowers.

Its subcellular location is the nucleus. In terms of biological role, aux/IAA proteins are short-lived transcriptional factors that function as repressors of early auxin response genes at low auxin concentrations. This is Auxin-responsive protein IAA20 (IAA20) from Oryza sativa subsp. japonica (Rice).